The following is an 85-amino-acid chain: Thioredoxin (85 aa).

The region spanning 1–85 (MSKVKIELFT…ALVEAIKKRL (85 aa)) is the Glutaredoxin domain. The cysteines at positions 14 and 17 are disulfide-linked.

The protein belongs to the glutaredoxin family.

It localises to the cytoplasm. Acts to maintain redox homeostasis; functions as a protein disulfide reductase. This Methanocaldococcus jannaschii (strain ATCC 43067 / DSM 2661 / JAL-1 / JCM 10045 / NBRC 100440) (Methanococcus jannaschii) protein is Thioredoxin (trx).